The primary structure comprises 368 residues: 3-dehydroquinate synthase (368 aa).

NAD(+)-binding positions include 71–76 (DGESFK), 105–109 (GVIGD), 129–130 (TT), lysine 142, lysine 151, and 169–172 (TLRT). Positions 184, 247, and 264 each coordinate Zn(2+).

The protein belongs to the sugar phosphate cyclases superfamily. Dehydroquinate synthase family. It depends on Co(2+) as a cofactor. Requires Zn(2+) as cofactor. NAD(+) serves as cofactor.

Its subcellular location is the cytoplasm. It catalyses the reaction 7-phospho-2-dehydro-3-deoxy-D-arabino-heptonate = 3-dehydroquinate + phosphate. Its pathway is metabolic intermediate biosynthesis; chorismate biosynthesis; chorismate from D-erythrose 4-phosphate and phosphoenolpyruvate: step 2/7. In terms of biological role, catalyzes the conversion of 3-deoxy-D-arabino-heptulosonate 7-phosphate (DAHP) to dehydroquinate (DHQ). This is 3-dehydroquinate synthase from Ralstonia pickettii (strain 12J).